The primary structure comprises 906 residues: Peroxisomal hydratase-dehydrogenase-epimerase (906 aa).

Short-chain dehydrogenase like stretches follow at residues 5–228 (DFKD…SSAE) and 319–532 (SLKD…GTDD). Positions 13, 52, 98, and 131 each coordinate NADP(+). Catalysis depends on proton donor residues Ser149 and Tyr163. 2 residues coordinate NADP(+): Tyr163 and Lys167. Tyr163 functions as the Proton acceptor in the catalytic mechanism. Catalysis depends on Lys167, which acts as the Lowers pKa of active site Tyr. Tyr467 functions as the Proton acceptor in the catalytic mechanism. The segment at 600 to 633 (AVGGDDDDDDEDEEEDEGDEEEDEEDEEEDDPVW) is disordered. The span at 603 to 630 (GDDDDDDEDEEEDEGDEEEDEEDEEEDD) shows a compositional bias: acidic residues. Positions 699, 700, 729, 757, 808, 810, 831, 856, 857, and 858 each coordinate (3R)-3-hydroxydecanoyl-CoA. Positions 782 to 893 (APKRAPDYQV…VVDRGTIAIN (112 aa)) constitute a MaoC-like domain. The Microbody targeting signal motif lies at 904–906 (AKI).

It belongs to the short-chain dehydrogenases/reductases (SDR) family. As to quaternary structure, monomer.

The protein localises to the peroxisome. It catalyses the reaction a (3R)-3-hydroxyacyl-CoA = a (2E)-enoyl-CoA + H2O. It carries out the reaction a (3R)-3-hydroxyacyl-CoA + NAD(+) = a 3-oxoacyl-CoA + NADH + H(+). Its pathway is lipid metabolism; fatty acid beta-oxidation. Functionally, second trifunctional enzyme acting on the beta-oxidation pathway for fatty acids, possessing hydratase-dehydrogenase-epimerase activities. Converts trans-2-enoyl-CoA via D-3-hydroxyacyl-CoA to 3-ketoacyl-CoA. This chain is Peroxisomal hydratase-dehydrogenase-epimerase, found in Candida tropicalis (Yeast).